Consider the following 420-residue polypeptide: Glutamate dehydrogenase (420 aa).

Lys105 is a catalytic residue. 220–226 (GYGNAGY) contacts NAD(+).

Belongs to the Glu/Leu/Phe/Val dehydrogenases family. Homohexamer.

The protein resides in the cytoplasm. It carries out the reaction L-glutamate + NAD(+) + H2O = 2-oxoglutarate + NH4(+) + NADH + H(+). The enzyme catalyses L-glutamate + NADP(+) + H2O = 2-oxoglutarate + NH4(+) + NADPH + H(+). The sequence is that of Glutamate dehydrogenase (gdhA) from Pyrococcus endeavori.